A 145-amino-acid chain; its full sequence is Alpha-amylase/trypsin inhibitor CM1 (145 aa).

The first 25 residues, Met-1–Ala-25, serve as a signal peptide directing secretion.

It belongs to the protease inhibitor I6 (cereal trypsin/alpha-amylase inhibitor) family. As to quaternary structure, subunit of the tetrameric inhibitor. Endosperm.

It localises to the secreted. In terms of biological role, alpha-amylase/trypsin inhibitor. It could be involved in insect defense mechanisms. The chain is Alpha-amylase/trypsin inhibitor CM1 from Triticum aestivum (Wheat).